We begin with the raw amino-acid sequence, 71 residues long: Small ribosomal subunit protein bS21 (71 aa).

Basic residues predominate over residues 49–59 (KAAAVKRAAKK). Positions 49 to 71 (KAAAVKRAAKKVSRENARRVRMY) are disordered. The segment covering 60 to 71 (VSRENARRVRMY) has biased composition (basic and acidic residues).

Belongs to the bacterial ribosomal protein bS21 family.

The protein is Small ribosomal subunit protein bS21 of Colwellia psychrerythraea (strain 34H / ATCC BAA-681) (Vibrio psychroerythus).